The chain runs to 231 residues: Augmin complex subunit dgt2 (231 aa).

A coiled-coil region spans residues 128–199 (QEADLSCDQK…VQTKAELLRG (72 aa)).

As to quaternary structure, component of the augmin complex composed of dgt2, dgt3, dgt4, dgt5, dgt6, msd1, msd5 and wac. The complex interacts directly or indirectly with microtubules and is required for centrosome-independent generation of spindle microtubules. dgt2 interacts directly with wac (via coiled coil). As to expression, in adult females, detected only in the abdomen with no expression in the head or thorax (at protein level).

It is found in the cytoplasm. The protein localises to the cytoskeleton. The protein resides in the spindle. Its subcellular location is the spindle pole. In terms of biological role, as part of the augmin complex, plays a role in centrosome-independent generation of spindle microtubules. The complex is required for mitotic spindle assembly through its involvement in localizing gamma-tubulin to spindle microtubules. dgt2 binds to microtubules in vitro. In Drosophila melanogaster (Fruit fly), this protein is Augmin complex subunit dgt2.